The following is a 398-amino-acid chain: Phosphoglycerate kinase (398 aa).

Substrate contacts are provided by residues 23–25 (DFN), R38, 61–64 (HMGK), R122, and R155. Residues K206, G297, E328, and 354–357 (GGDS) contribute to the ATP site.

This sequence belongs to the phosphoglycerate kinase family. In terms of assembly, monomer.

The protein localises to the cytoplasm. It carries out the reaction (2R)-3-phosphoglycerate + ATP = (2R)-3-phospho-glyceroyl phosphate + ADP. It functions in the pathway carbohydrate degradation; glycolysis; pyruvate from D-glyceraldehyde 3-phosphate: step 2/5. This chain is Phosphoglycerate kinase, found in Clostridium botulinum (strain 657 / Type Ba4).